We begin with the raw amino-acid sequence, 173 residues long: Putative pre-16S rRNA nuclease (173 aa).

It belongs to the YqgF nuclease family.

It is found in the cytoplasm. In terms of biological role, could be a nuclease involved in processing of the 5'-end of pre-16S rRNA. This Rhodopirellula baltica (strain DSM 10527 / NCIMB 13988 / SH1) protein is Putative pre-16S rRNA nuclease.